The following is a 173-amino-acid chain: Inorganic pyrophosphatase (173 aa).

The substrate site is built by K29, R43, and Y55. Residues D65, D70, and D102 each contribute to the Mg(2+) site. A substrate-binding site is contributed by Y141.

The protein belongs to the PPase family. Homohexamer. Requires Mg(2+) as cofactor.

Its subcellular location is the cytoplasm. The catalysed reaction is diphosphate + H2O = 2 phosphate + H(+). Catalyzes the hydrolysis of inorganic pyrophosphate (PPi) forming two phosphate ions. This chain is Inorganic pyrophosphatase, found in Rickettsia felis (strain ATCC VR-1525 / URRWXCal2) (Rickettsia azadi).